Consider the following 261-residue polypeptide: Carnitinyl-CoA dehydratase (261 aa).

Glutamate 111 (nucleophile) is an active-site residue. The active-site Proton acceptor is glutamate 131.

It belongs to the enoyl-CoA hydratase/isomerase family.

The catalysed reaction is (R)-carnitinyl-CoA = crotonobetainyl-CoA + H2O. It functions in the pathway amine and polyamine metabolism; carnitine metabolism. Functionally, catalyzes the reversible dehydration of L-carnitinyl-CoA to crotonobetainyl-CoA. This chain is Carnitinyl-CoA dehydratase, found in Salmonella typhimurium (strain LT2 / SGSC1412 / ATCC 700720).